A 512-amino-acid polypeptide reads, in one-letter code: Glutathione-binding protein GsiB (512 aa).

An N-terminal signal peptide occupies residues 1–26 (MTQFITHKWLAALGLASSIAAFPALA).

The protein belongs to the bacterial solute-binding protein 5 family. The complex is composed of two ATP-binding proteins (GsiA), two transmembrane proteins (GsiC and GsiD) and a solute-binding protein (GsiB).

The protein resides in the periplasm. Functionally, part of the ABC transporter complex GsiABCD involved in glutathione import. Binds glutathione. The protein is Glutathione-binding protein GsiB of Salmonella typhimurium (strain LT2 / SGSC1412 / ATCC 700720).